The primary structure comprises 389 residues: Na(+)/H(+) antiporter NhaA (389 aa).

11 helical membrane passes run 17–37, 59–79, 95–115, 124–144, 154–174, 177–197, 213–233, 261–281, 292–312, 328–348, and 363–383; these read ILLL…LAGF, LLLW…GLEV, SLPT…YLLF, AGWA…MALL, VFLL…IALF, SDLS…LVAL, LILW…GVII, FLIL…NMSL, IALG…FVAV, IAPV…IASL, and LGTL…LSKV.

This sequence belongs to the NhaA Na(+)/H(+) (TC 2.A.33) antiporter family.

The protein localises to the cell inner membrane. The catalysed reaction is Na(+)(in) + 2 H(+)(out) = Na(+)(out) + 2 H(+)(in). Na(+)/H(+) antiporter that extrudes sodium in exchange for external protons. The chain is Na(+)/H(+) antiporter NhaA from Shewanella oneidensis (strain ATCC 700550 / JCM 31522 / CIP 106686 / LMG 19005 / NCIMB 14063 / MR-1).